The sequence spans 360 residues: UDP-D-xylose:L-fucose alpha-1,3-D-xylosyltransferase MGP4 (360 aa).

The segment at methionine 1 to leucine 25 is disordered. Topologically, residues methionine 1–asparagine 41 are cytoplasmic. The segment covering asparagine 14–leucine 25 has biased composition (low complexity). A helical; Signal-anchor for type II membrane protein membrane pass occupies residues glycine 42–serine 62. The Lumenal portion of the chain corresponds to proline 63–glutamate 360. Residues asparagine 93 and asparagine 168 are each glycosylated (N-linked (GlcNAc...) asparagine). A DXD motif motif is present at residues aspartate 191–aspartate 193. 2 N-linked (GlcNAc...) asparagine glycosylation sites follow: asparagine 285 and asparagine 310.

This sequence belongs to the glycosyltransferase 77 family. Mn(2+) is required as a cofactor. The cofactor is Mg(2+). As to expression, widely expressed.

The protein resides in the golgi apparatus membrane. In terms of biological role, catalyzes the transfer of D-xylose from UDP-alpha-D-xylose onto L-fucose. Probably involved in the biosynthesis of rhamnogalacturonan II (RG-II) through xylosylation of the internal fucose moiety of the A-chain of RG-II, a structurally complex pectic polysaccharide of the primary cell wall. RG-II is essential for the cell wall integrity of rapidly growing tissues such as roots and pollen tube growth and elongation. This is UDP-D-xylose:L-fucose alpha-1,3-D-xylosyltransferase MGP4 from Arabidopsis thaliana (Mouse-ear cress).